The following is a 503-amino-acid chain: Betaine aldehyde dehydrogenase 2 (503 aa).

161–170 (WNYPLLMATW) contributes to the betaine aldehyde binding site. An NAD(+)-binding site is contributed by 238-243 (GSYETG). Betaine aldehyde is bound by residues E260, 292–295 (QICS), and C453. Active-site residues include E260 and C294. Residues 260-261 (EL) and C294 each bind 4-aminobutanal. W459 serves as a coordination point for 4-aminobutanal. Residues 501–503 (SKL) carry the Microbody targeting signal motif.

Belongs to the aldehyde dehydrogenase family. As to quaternary structure, homodimer.

Its subcellular location is the peroxisome. The protein resides in the cytoplasm. It catalyses the reaction betaine aldehyde + NAD(+) + H2O = glycine betaine + NADH + 2 H(+). Its pathway is amine and polyamine biosynthesis; betaine biosynthesis via choline pathway; betaine from betaine aldehyde: step 1/1. Its function is as follows. Dehydrogenase that can use N-acetyl-c-aminobutyraldehyde (NAGABald), gamma-guanidinobutyraldehyde (GGBald), betaine aldehyde (Bet-ald), gamma-aminobutyraldehyde (GAB-ald), acetaldehyde, 4-aminobutylaldehyde (AB-ald), 3-aminopropionaldehyde (AP-ald), 4-N-trimethylaminobutyraldehyde (TMAB-ald) and 3-N-trimethylaminopropionaldehyde (TMAP-ald) as substrates. Catalyzes the oxidation of GAB-ald more efficiently than Bet-ald. Mediates the conversion of GAB-ald into gamma-aminobutyric acid (GABA), and prevents the formation of 2-acetyl-1-pyrroline (2AP) which gives fragrant rice its aromatic properties. The polypeptide is Betaine aldehyde dehydrogenase 2 (BADH2) (Oryza sativa subsp. indica (Rice)).